Here is a 60-residue protein sequence, read N- to C-terminus: Large ribosomal subunit protein bL32 (60 aa).

Residues 1-60 (MAVQQNKKSRSARDMRRSHDALESNALSVEKSTGEVHLRHHVSPDGFYRGRKVVDKGSDE) form a disordered region. Residues 11-22 (SARDMRRSHDAL) are compositionally biased toward basic and acidic residues.

This sequence belongs to the bacterial ribosomal protein bL32 family.

This chain is Large ribosomal subunit protein bL32, found in Pseudomonas aeruginosa (strain LESB58).